The primary structure comprises 1488 residues: Chromosome partition protein MukB (1488 aa).

34-41 (GGNGAGKS) lines the ATP pocket. 3 coiled-coil regions span residues 326–418 (LEAD…QYNQ), 444–472 (LDTF…QTAH), and 509–602 (RHLA…QRAP). The segment at 666-783 (PGGAEDQRLN…SLPIFGRAAR (118 aa)) is flexible hinge. Coiled-coil stretches lie at residues 835–923 (EAEI…AKLE), 977–1116 (EMLS…AKAG), and 1209–1265 (VEAI…LQSV). A disordered region spans residues 1049 to 1074 (ADSGAEERARQRRDELHAQLSNNRSR). A compositionally biased stretch (basic and acidic residues) spans 1051–1065 (SGAEERARQRRDELH).

This sequence belongs to the SMC family. MukB subfamily. In terms of assembly, homodimerization via its hinge domain. Binds to DNA via its C-terminal region. Interacts, and probably forms a ternary complex, with MukE and MukF via its C-terminal region. The complex formation is stimulated by calcium or magnesium. Interacts with tubulin-related protein FtsZ.

Its subcellular location is the cytoplasm. The protein resides in the nucleoid. Functionally, plays a central role in chromosome condensation, segregation and cell cycle progression. Functions as a homodimer, which is essential for chromosome partition. Involved in negative DNA supercoiling in vivo, and by this means organize and compact chromosomes. May achieve or facilitate chromosome segregation by condensation DNA from both sides of a centrally located replisome during cell division. This is Chromosome partition protein MukB from Salmonella typhimurium (strain LT2 / SGSC1412 / ATCC 700720).